Consider the following 556-residue polypeptide: Methyltransferase/ribosomally synthesized type II borosin cyclic peptide precursor pgiMA1 (556 aa).

Residues 1–250 are methyltransferase domain; sequence MSSASSDSNT…SCSTLYVPPL (250 aa). Catalysis depends on residues Arg-74, Tyr-78, and Tyr-100. Positions 100, 102, 105, 174, 212, 243, and 244 each coordinate S-adenosyl-L-methionine. Residues 251–377 are clasp domain; the sequence is THANKFSGNM…GAVFGVMKLR (127 aa). The interval 378–386 is precursor leader; sequence ASEVANEQG. Residues Asp-421, Asp-434, Asp-447, Asp-460, Asp-473, Asp-486, Asp-499, Asp-512, Asp-525, and Asp-538 each carry the N-methylaspartate modification. The propeptide occupies 543–556; the sequence is AVPVPDHVAGIPCM.

This sequence in the N-terminal section; belongs to the precorrin methyltransferase family. As to quaternary structure, homodimer. PgiMA1 automethylates at Asp-421, Asp-434, Asp-447, Asp-460, Asp-473, Asp-486, Asp-499, Asp-512, Asp-525 and Asp-538 before being processed, probably by the M64 family peptidase found in the genes surrounding PgiMA1, to release methylated peptides which then undergos macrocyclization with the N-terminus of the modified core peptides. Peptide backbone alpha-N-methylations change the physicochemical properties of amide bonds to provide structural constraints and other favorable characteristics including biological membrane permeability to peptides.

Its pathway is secondary metabolite biosynthesis. Functionally, fusion protein of the methyltransferase pgiM1 and 12 type II borosin core peptides; part of the gene cluster that mediates the biosynthesis of a type II borosin, a highly methylated cyclic peptide with potent biological activities. Type II borosins derive from the C-terminus of the fusion protein, and it is the same protein that methylates its own C-terminus using S-adenosyl methionine (SAM). The C-terminus is subsequently cleaved off and macrocyclized by a prolyloligopeptidase to give the final product. In Phlebiopsis gigantea (strain 11061_1 CR5-6) (White-rot fungus), this protein is Methyltransferase/ribosomally synthesized type II borosin cyclic peptide precursor pgiMA1.